We begin with the raw amino-acid sequence, 381 residues long: Protein-glutamate methylesterase/protein-glutamine glutaminase 1 (381 aa).

Residues 14–132 (RVMLVDDSAV…DLAGGVDFKS (119 aa)) form the Response regulatory domain. A 4-aspartylphosphate modification is found at Asp-65. The tract at residues 143 to 173 (QARRAGARPARPGGPPATRPVIASTSPRTPV) is disordered. Positions 144-153 (ARRAGARPAR) are enriched in low complexity. The region spanning 188 to 381 (PEPPDIIAIG…PWIMKLAARR (194 aa)) is the CheB-type methylesterase domain. Active-site residues include Ser-199, His-227, and Asp-323.

The protein belongs to the CheB family. In terms of processing, phosphorylated by CheA. Phosphorylation of the N-terminal regulatory domain activates the methylesterase activity.

It is found in the cytoplasm. It catalyses the reaction [protein]-L-glutamate 5-O-methyl ester + H2O = L-glutamyl-[protein] + methanol + H(+). It carries out the reaction L-glutaminyl-[protein] + H2O = L-glutamyl-[protein] + NH4(+). Its function is as follows. Involved in chemotaxis. Part of a chemotaxis signal transduction system that modulates chemotaxis in response to various stimuli. Catalyzes the demethylation of specific methylglutamate residues introduced into the chemoreceptors (methyl-accepting chemotaxis proteins or MCP) by CheR. Also mediates the irreversible deamidation of specific glutamine residues to glutamic acid. This chain is Protein-glutamate methylesterase/protein-glutamine glutaminase 1, found in Paramagnetospirillum magneticum (strain ATCC 700264 / AMB-1) (Magnetospirillum magneticum).